The sequence spans 226 residues: 2-C-methyl-D-erythritol 4-phosphate cytidylyltransferase (226 aa).

This sequence belongs to the IspD/TarI cytidylyltransferase family. IspD subfamily.

It carries out the reaction 2-C-methyl-D-erythritol 4-phosphate + CTP + H(+) = 4-CDP-2-C-methyl-D-erythritol + diphosphate. It functions in the pathway isoprenoid biosynthesis; isopentenyl diphosphate biosynthesis via DXP pathway; isopentenyl diphosphate from 1-deoxy-D-xylulose 5-phosphate: step 2/6. Functionally, catalyzes the formation of 4-diphosphocytidyl-2-C-methyl-D-erythritol from CTP and 2-C-methyl-D-erythritol 4-phosphate (MEP). This Synechococcus sp. (strain CC9902) protein is 2-C-methyl-D-erythritol 4-phosphate cytidylyltransferase.